A 115-amino-acid polypeptide reads, in one-letter code: NADH-ubiquinone oxidoreductase chain 3 (115 aa).

The next 3 membrane-spanning stretches (helical) occupy residues 3 to 23, 55 to 75, and 86 to 106; these read LMAT…IAFW, FFLV…LLPL, and LTLL…AYEW.

Belongs to the complex I subunit 3 family. As to quaternary structure, core subunit of respiratory chain NADH dehydrogenase (Complex I) which is composed of 45 different subunits. Interacts with TMEM186. Interacts with TMEM242.

The protein resides in the mitochondrion inner membrane. It catalyses the reaction a ubiquinone + NADH + 5 H(+)(in) = a ubiquinol + NAD(+) + 4 H(+)(out). In terms of biological role, core subunit of the mitochondrial membrane respiratory chain NADH dehydrogenase (Complex I) which catalyzes electron transfer from NADH through the respiratory chain, using ubiquinone as an electron acceptor. Essential for the catalytic activity of complex I. The chain is NADH-ubiquinone oxidoreductase chain 3 from Mammuthus primigenius (Siberian woolly mammoth).